We begin with the raw amino-acid sequence, 404 residues long: Probable tRNA sulfurtransferase (404 aa).

The THUMP domain occupies glutamine 60–glutamate 165. Residues methionine 183–leucine 184, histidine 208–phenylalanine 209, arginine 265, glycine 287, and glutamine 296 each bind ATP.

It belongs to the ThiI family.

It is found in the cytoplasm. The catalysed reaction is [ThiI sulfur-carrier protein]-S-sulfanyl-L-cysteine + a uridine in tRNA + 2 reduced [2Fe-2S]-[ferredoxin] + ATP + H(+) = [ThiI sulfur-carrier protein]-L-cysteine + a 4-thiouridine in tRNA + 2 oxidized [2Fe-2S]-[ferredoxin] + AMP + diphosphate. It catalyses the reaction [ThiS sulfur-carrier protein]-C-terminal Gly-Gly-AMP + S-sulfanyl-L-cysteinyl-[cysteine desulfurase] + AH2 = [ThiS sulfur-carrier protein]-C-terminal-Gly-aminoethanethioate + L-cysteinyl-[cysteine desulfurase] + A + AMP + 2 H(+). The protein operates within cofactor biosynthesis; thiamine diphosphate biosynthesis. Catalyzes the ATP-dependent transfer of a sulfur to tRNA to produce 4-thiouridine in position 8 of tRNAs, which functions as a near-UV photosensor. Also catalyzes the transfer of sulfur to the sulfur carrier protein ThiS, forming ThiS-thiocarboxylate. This is a step in the synthesis of thiazole, in the thiamine biosynthesis pathway. The sulfur is donated as persulfide by IscS. This chain is Probable tRNA sulfurtransferase, found in Streptococcus pyogenes serotype M3 (strain ATCC BAA-595 / MGAS315).